A 402-amino-acid chain; its full sequence is 1-deoxy-D-xylulose 5-phosphate reductoisomerase (402 aa).

T10, G11, S12, I13, N38, and N124 together coordinate NADPH. Position 125 (K125) interacts with 1-deoxy-D-xylulose 5-phosphate. E126 lines the NADPH pocket. Mn(2+) is bound at residue D150. 1-deoxy-D-xylulose 5-phosphate-binding residues include S151, E152, S186, and H209. Residue E152 coordinates Mn(2+). Residue G215 participates in NADPH binding. Positions 222, 227, 228, and 231 each coordinate 1-deoxy-D-xylulose 5-phosphate. Residue E231 coordinates Mn(2+).

This sequence belongs to the DXR family. It depends on Mg(2+) as a cofactor. Mn(2+) is required as a cofactor.

It carries out the reaction 2-C-methyl-D-erythritol 4-phosphate + NADP(+) = 1-deoxy-D-xylulose 5-phosphate + NADPH + H(+). It participates in isoprenoid biosynthesis; isopentenyl diphosphate biosynthesis via DXP pathway; isopentenyl diphosphate from 1-deoxy-D-xylulose 5-phosphate: step 1/6. Functionally, catalyzes the NADPH-dependent rearrangement and reduction of 1-deoxy-D-xylulose-5-phosphate (DXP) to 2-C-methyl-D-erythritol 4-phosphate (MEP). The chain is 1-deoxy-D-xylulose 5-phosphate reductoisomerase from Vibrio vulnificus (strain YJ016).